Here is a 252-residue protein sequence, read N- to C-terminus: Triosephosphate isomerase (252 aa).

10 to 12 (NWK) lines the substrate pocket. His96 acts as the Electrophile in catalysis. Glu168 (proton acceptor) is an active-site residue. Substrate-binding positions include Gly174, Ser214, and 235-236 (GG).

This sequence belongs to the triosephosphate isomerase family. Homodimer.

The protein localises to the cytoplasm. It carries out the reaction D-glyceraldehyde 3-phosphate = dihydroxyacetone phosphate. It functions in the pathway carbohydrate biosynthesis; gluconeogenesis. It participates in carbohydrate degradation; glycolysis; D-glyceraldehyde 3-phosphate from glycerone phosphate: step 1/1. In terms of biological role, involved in the gluconeogenesis. Catalyzes stereospecifically the conversion of dihydroxyacetone phosphate (DHAP) to D-glyceraldehyde-3-phosphate (G3P). The chain is Triosephosphate isomerase from Lactobacillus delbrueckii subsp. bulgaricus (strain ATCC 11842 / DSM 20081 / BCRC 10696 / JCM 1002 / NBRC 13953 / NCIMB 11778 / NCTC 12712 / WDCM 00102 / Lb 14).